The chain runs to 103 residues: Small ribosomal subunit protein uS10 (103 aa).

This sequence belongs to the universal ribosomal protein uS10 family. Part of the 30S ribosomal subunit.

In terms of biological role, involved in the binding of tRNA to the ribosomes. The chain is Small ribosomal subunit protein uS10 from Ruminiclostridium cellulolyticum (strain ATCC 35319 / DSM 5812 / JCM 6584 / H10) (Clostridium cellulolyticum).